A 249-amino-acid polypeptide reads, in one-letter code: GTP cyclohydrolase III (249 aa).

It belongs to the archaeal-type GTP cyclohydrolase family.

It catalyses the reaction GTP + 3 H2O = 2-amino-5-formylamino-6-(5-phospho-D-ribosylamino)pyrimidin-4(3H)-one + 2 phosphate + 2 H(+). Functionally, catalyzes the formation of 2-amino-5-formylamino-6-ribofuranosylamino-4(3H)-pyrimidinone ribonucleotide monophosphate and inorganic phosphate from GTP. Also has an independent pyrophosphate phosphohydrolase activity. The sequence is that of GTP cyclohydrolase III from Methanothermobacter thermautotrophicus (strain ATCC 29096 / DSM 1053 / JCM 10044 / NBRC 100330 / Delta H) (Methanobacterium thermoautotrophicum).